A 2213-amino-acid polypeptide reads, in one-letter code: Protein sidekick-1 (2213 aa).

The segment at Met-1–Ala-73 is disordered. Low complexity predominate over residues Ala-23–Pro-38. Ig-like C2-type domains lie at Pro-104–Gln-186, Gly-191–Ile-277, Pro-293–Ala-378, Pro-386–Thr-476, and Pro-480–Thr-569. Cysteines 126 and 169 form a disulfide. N-linked (GlcNAc...) asparagine glycosylation is found at Asn-271 and Asn-301. 3 disulfide bridges follow: Cys-315–Cys-362, Cys-408–Cys-458, and Cys-501–Cys-553. Asn-550, Asn-563, and Asn-572 each carry an N-linked (GlcNAc...) asparagine glycan. One can recognise an Ig-like C2-type 6 domain in the interval Thr-574–Glu-663. A disulfide bridge links Cys-595 with Cys-647. Residues Asn-655, Asn-679, Asn-782, Asn-821, Asn-882, Asn-1015, and Asn-1024 are each glycosylated (N-linked (GlcNAc...) asparagine). Fibronectin type-III domains lie at Ser-670–Glu-766, Pro-771–Gly-867, Pro-872–Asp-970, Ala-974–Asp-1068, Ala-1072–Ala-1171, Ala-1176–Ser-1274, Ala-1279–Asp-1376, Pro-1380–Arg-1474, Pro-1479–Asp-1576, Pro-1581–Ala-1699, Ala-1704–Ala-1800, Ala-1804–Ala-1899, and Ser-1902–Val-2000. 2 N-linked (GlcNAc...) asparagine glycosylation sites follow: Asn-1282 and Asn-1333. N-linked (GlcNAc...) asparagine glycans are attached at residues Asn-1654, Asn-1748, Asn-1767, Asn-1819, and Asn-1893. The helical transmembrane segment at Phe-2010 to Val-2030 threads the bilayer. The Cytoplasmic segment spans residues Leu-2031–Val-2213. Residues Ser-2075–Asp-2098 form a disordered region. The short motif at Thr-2207 to Val-2213 is the PDZ-binding element.

It belongs to the sidekick family. Homodimer; mediates homophilic interactions to promote cell adhesion. In terms of tissue distribution, up-regulated in glomeruli in HIV-associated nephropathy. In diseased glomeruli, significantly overexpressed and the expression is no longer restricted to mesangial cells but includes podocytes and parietal epithelial cells.

The protein resides in the cell membrane. It is found in the synapse. Its function is as follows. Adhesion molecule that promotes lamina-specific synaptic connections in the retina. Expressed in specific subsets of interneurons and retinal ganglion cells (RGCs) and promotes synaptic connectivity via homophilic interactions. This chain is Protein sidekick-1, found in Homo sapiens (Human).